Reading from the N-terminus, the 453-residue chain is ATP-dependent RNA helicase dbp8 (453 aa).

Residues 7-35 carry the Q motif motif; the sequence is KSFSDLGISPWLIDTLKALAIYEPTDIQE. The 177-residue stretch at 38–214 folds into the Helicase ATP-binding domain; that stretch reads IAQILEGRNC…YQPQKNNKPP (177 aa). ATP is bound at residue 51 to 58; the sequence is AKTGSGKT. The DEAD box motif lies at 160–163; the sequence is DEAD. The region spanning 230–393 is the Helicase C-terminal domain; sequence TLQQSYIFVS…YEHVSENKML (164 aa). The interval 413–453 is disordered; sequence RGFGERRQKRNEKRLMANGISNKLKNSGRKKKAKNTLSTEK.

The protein belongs to the DEAD box helicase family. DDX49/DBP8 subfamily.

It localises to the nucleus. Its subcellular location is the nucleolus. It carries out the reaction ATP + H2O = ADP + phosphate + H(+). ATP-binding RNA helicase involved in 40S ribosomal subunit biogenesis and is required for the normal formation of 18S rRNAs through pre-rRNA processing at A0, A1 and A2 sites. Required for vegetative growth. This is ATP-dependent RNA helicase dbp8 (dbp8) from Schizosaccharomyces pombe (strain 972 / ATCC 24843) (Fission yeast).